The primary structure comprises 215 residues: NADH-quinone oxidoreductase subunit C (215 aa).

It belongs to the complex I 30 kDa subunit family. NDH-1 is composed of 14 different subunits. Subunits NuoB, C, D, E, F, and G constitute the peripheral sector of the complex.

It is found in the cell inner membrane. The enzyme catalyses a quinone + NADH + 5 H(+)(in) = a quinol + NAD(+) + 4 H(+)(out). Its function is as follows. NDH-1 shuttles electrons from NADH, via FMN and iron-sulfur (Fe-S) centers, to quinones in the respiratory chain. The immediate electron acceptor for the enzyme in this species is believed to be ubiquinone. Couples the redox reaction to proton translocation (for every two electrons transferred, four hydrogen ions are translocated across the cytoplasmic membrane), and thus conserves the redox energy in a proton gradient. This is NADH-quinone oxidoreductase subunit C from Methylobacterium radiotolerans (strain ATCC 27329 / DSM 1819 / JCM 2831 / NBRC 15690 / NCIMB 10815 / 0-1).